Here is a 92-residue protein sequence, read N- to C-terminus: RTCPYAQRARLIIAAKGISADLVNVDLNKKPDHFFDLNPYGEVPVVLHNGGHVYESLIAAEYLEEAFPDPPLFAKEALVRANERIYFNHATK.

The 71-residue stretch at 1–71 folds into the GST N-terminal domain; sequence RTCPYAQRAR…YLEEAFPDPP (71 aa). Residue Cys3 is the Nucleophile of the active site. Glutathione contacts are provided by residues Lys30, Val43, and 55 to 56; that span reads ES.

Belongs to the GST superfamily. Omega family.

It catalyses the reaction RX + glutathione = an S-substituted glutathione + a halide anion + H(+). The enzyme catalyses L-dehydroascorbate + 2 glutathione = glutathione disulfide + L-ascorbate. It carries out the reaction methylarsonate + 2 glutathione + H(+) = methylarsonous acid + glutathione disulfide + H2O. Exhibits glutathione-dependent thiol transferase activity. Has dehydroascorbate reductase activity and may contribute to the recycling of ascorbic acid. Participates in the biotransformation of inorganic arsenic and reduces monomethylarsonic acid (MMA). The chain is Probable glutathione transferase from Aplysia californica (California sea hare).